Consider the following 392-residue polypeptide: MRYTTAGESHGPEEIAVIEGIPAGLHITQEDVNAQLARRQKGYGRGERQKIETDTVTFLTGIRHQKTLGSPITLNVHNDDHNNWSKIMAPNEPQTSENSLRKVLRPRPGHADLVGGIKYRHHDDLRNVLERSSARETTMRVAVGAVAKKLLAEIGVDVHGFVVNVGPAKSDLSTLTQYQDLEALRQVTESFETRALDAAADKAIRDVIDSTKRDANTVGGQVQVMATGVPVGLGSYISADDKLDAKIARAIVGINAFKGVQFGGGFDNAEKYGDQVMDEIFWRPEKGFYRGSDNLGGFEGGMTTGEAIVVRGVVKPIPTLYRPMQSVDIDTHQDHRASIERSDTTAVTAAAVIAEAMVAIELAKAVLDKFDADNIDRMKEQVAAYRQEVKAF.

NADP(+) is bound by residues arginine 39 and arginine 45. FMN-binding positions include arginine 131–serine 133, asparagine 255–alanine 256, glycine 300, lysine 315–threonine 319, and arginine 341.

This sequence belongs to the chorismate synthase family. As to quaternary structure, homotetramer. FMNH2 is required as a cofactor.

It carries out the reaction 5-O-(1-carboxyvinyl)-3-phosphoshikimate = chorismate + phosphate. Its pathway is metabolic intermediate biosynthesis; chorismate biosynthesis; chorismate from D-erythrose 4-phosphate and phosphoenolpyruvate: step 7/7. In terms of biological role, catalyzes the anti-1,4-elimination of the C-3 phosphate and the C-6 proR hydrogen from 5-enolpyruvylshikimate-3-phosphate (EPSP) to yield chorismate, which is the branch point compound that serves as the starting substrate for the three terminal pathways of aromatic amino acid biosynthesis. This reaction introduces a second double bond into the aromatic ring system. In Leuconostoc citreum (strain KM20), this protein is Chorismate synthase.